A 454-amino-acid chain; its full sequence is Ribosomal protein uS12 methylthiotransferase RimO (454 aa).

An MTTase N-terminal domain is found at S14–K125. Residues C23, C59, C88, C163, C167, and C170 each coordinate [4Fe-4S] cluster. The region spanning D149 to D378 is the Radical SAM core domain. The 72-residue stretch at Q381 to K452 folds into the TRAM domain.

The protein belongs to the methylthiotransferase family. RimO subfamily. The cofactor is [4Fe-4S] cluster.

It is found in the cytoplasm. It catalyses the reaction L-aspartate(89)-[ribosomal protein uS12]-hydrogen + (sulfur carrier)-SH + AH2 + 2 S-adenosyl-L-methionine = 3-methylsulfanyl-L-aspartate(89)-[ribosomal protein uS12]-hydrogen + (sulfur carrier)-H + 5'-deoxyadenosine + L-methionine + A + S-adenosyl-L-homocysteine + 2 H(+). In terms of biological role, catalyzes the methylthiolation of an aspartic acid residue of ribosomal protein uS12. The chain is Ribosomal protein uS12 methylthiotransferase RimO from Prochlorococcus marinus (strain MIT 9312).